A 257-amino-acid chain; its full sequence is DNA repair protein RecO (257 aa).

The protein belongs to the RecO family.

Its function is as follows. Involved in DNA repair and RecF pathway recombination. The polypeptide is DNA repair protein RecO (Clostridium kluyveri (strain ATCC 8527 / DSM 555 / NBRC 12016 / NCIMB 10680 / K1)).